A 245-amino-acid polypeptide reads, in one-letter code: Carboxy-S-adenosyl-L-methionine synthase (245 aa).

Residues Tyr-42, 67–69 (GCS), 92–93 (DN), 120–121 (DI), Asn-135, and Arg-202 each bind S-adenosyl-L-methionine.

Belongs to the class I-like SAM-binding methyltransferase superfamily. Cx-SAM synthase family. As to quaternary structure, homodimer.

It catalyses the reaction prephenate + S-adenosyl-L-methionine = carboxy-S-adenosyl-L-methionine + 3-phenylpyruvate + H2O. Catalyzes the conversion of S-adenosyl-L-methionine (SAM) to carboxy-S-adenosyl-L-methionine (Cx-SAM). In Vibrio parahaemolyticus serotype O3:K6 (strain RIMD 2210633), this protein is Carboxy-S-adenosyl-L-methionine synthase.